The sequence spans 461 residues: Phosphomethylpyrimidine synthase (461 aa).

Residues N80, M109, Y139, H174, S194–G196, D235–R238, and E274 contribute to the substrate site. Zn(2+) is bound at residue H278. A substrate-binding site is contributed by Y301. H342 contacts Zn(2+). C422, C425, and C430 together coordinate [4Fe-4S] cluster.

The protein belongs to the ThiC family. In terms of assembly, homodimer. [4Fe-4S] cluster serves as cofactor.

It catalyses the reaction 5-amino-1-(5-phospho-beta-D-ribosyl)imidazole + S-adenosyl-L-methionine = 4-amino-2-methyl-5-(phosphooxymethyl)pyrimidine + CO + 5'-deoxyadenosine + formate + L-methionine + 3 H(+). It participates in cofactor biosynthesis; thiamine diphosphate biosynthesis. Functionally, catalyzes the synthesis of the hydroxymethylpyrimidine phosphate (HMP-P) moiety of thiamine from aminoimidazole ribotide (AIR) in a radical S-adenosyl-L-methionine (SAM)-dependent reaction. The protein is Phosphomethylpyrimidine synthase of Nautilia profundicola (strain ATCC BAA-1463 / DSM 18972 / AmH).